A 1042-amino-acid polypeptide reads, in one-letter code: Isoleucine--tRNA ligase (1042 aa).

The short motif at P48–H58 is the 'HIGH' region element. The 'KMSKS' region motif lies at K594–S598. K597 contributes to the ATP binding site.

This sequence belongs to the class-I aminoacyl-tRNA synthetase family. IleS type 2 subfamily. Monomer. Zn(2+) serves as cofactor.

It is found in the cytoplasm. The catalysed reaction is tRNA(Ile) + L-isoleucine + ATP = L-isoleucyl-tRNA(Ile) + AMP + diphosphate. In terms of biological role, catalyzes the attachment of isoleucine to tRNA(Ile). As IleRS can inadvertently accommodate and process structurally similar amino acids such as valine, to avoid such errors it has two additional distinct tRNA(Ile)-dependent editing activities. One activity is designated as 'pretransfer' editing and involves the hydrolysis of activated Val-AMP. The other activity is designated 'posttransfer' editing and involves deacylation of mischarged Val-tRNA(Ile). The chain is Isoleucine--tRNA ligase from Borrelia garinii subsp. bavariensis (strain ATCC BAA-2496 / DSM 23469 / PBi) (Borreliella bavariensis).